The following is a 239-amino-acid chain: Phosphoribosylaminoimidazole-succinocarboxamide synthase (239 aa).

This sequence belongs to the SAICAR synthetase family.

The enzyme catalyses 5-amino-1-(5-phospho-D-ribosyl)imidazole-4-carboxylate + L-aspartate + ATP = (2S)-2-[5-amino-1-(5-phospho-beta-D-ribosyl)imidazole-4-carboxamido]succinate + ADP + phosphate + 2 H(+). It participates in purine metabolism; IMP biosynthesis via de novo pathway; 5-amino-1-(5-phospho-D-ribosyl)imidazole-4-carboxamide from 5-amino-1-(5-phospho-D-ribosyl)imidazole-4-carboxylate: step 1/2. The sequence is that of Phosphoribosylaminoimidazole-succinocarboxamide synthase from Bacillus cytotoxicus (strain DSM 22905 / CIP 110041 / 391-98 / NVH 391-98).